Reading from the N-terminus, the 887-residue chain is Phosphatidylinositol 3-kinase catalytic subunit type 3 (887 aa).

Positions 35–184 (YKAVLEDPML…LAKLTKAHRQ (150 aa)) constitute a C2 PI3K-type domain. The tract at residues 149–170 (VEADGSEPTKTPGRTSSTLSED) is disordered. Residues 156–170 (PTKTPGRTSSTLSED) show a composition bias toward polar residues. Thr-163 bears the Phosphothreonine; by AMPK mark. A Phosphoserine; by AMPK modification is found at Ser-165. A phosphoserine mark is found at Ser-244, Ser-261, and Ser-282. Residues 283-520 (DHDLKPNAAT…PKTHEMYLNV (238 aa)) enclose the PIK helical domain. The tract at residues 447–467 (TSPLPSVSSPPPASKTKEVPD) is disordered. One can recognise a PI3K/PI4K catalytic domain in the interval 605-871 (IPETATLFKS…LIDESVHALF (267 aa)). The G-loop stretch occupies residues 611–617 (LFKSALM). Positions 740 to 748 (GVGDRHLDN) are catalytic loop. The tract at residues 759-780 (HIDFGYILGRDPKPLPPPMKLN) is activation loop.

Belongs to the PI3/PI4-kinase family. In terms of assembly, component of the PI3K (PI3KC3/PI3K-III/class III phosphatidylinositol 3-kinase) complex the core of which is composed of the catalytic subunit PIK3C3, the regulatory subunit PIK3R4 and BECN1 associating with additional regulatory/auxiliary subunits to form alternative complex forms. Alternative complex forms containing a fourth regulatory subunit in a mutually exclusive manner are: the PI3K complex I (PI3KC3-C1) containing ATG14, and the PI3K complex II (PI3KC3-C2) containing UVRAG. PI3KC3-C1 displays a V-shaped architecture with PIK3R4 serving as a bridge between PIK3C3 and the ATG14:BECN1 subcomplex. Both, PI3KC3-C1 and PI3KC3-C2, can associate with further regulatory subunits such as RUBCN, SH3GLB1/Bif-1 and AMBRA1. PI3KC3-C1 probably associates with PIK3CB. Interacts with RAB7A in the presence of PIK3R4. Interacts with AMBRA1. Interacts with BECN1P1/BECN2. Interacts with SLAMF1. May be a component of a complex composed of RAB5A (in GDP-bound form), DYN2 and PIK3C3. Interacts with NCKAP1L. Interacts with ATG14; this interaction is increased in the absence of TMEM39A. Interacts with STEEP1; the interaction is STING1-dependent and required for trafficking of STING1 from the endoplasmic reticulum. Interacts with YWHAG. Interacts with ARMC3. Mn(2+) is required as a cofactor. Post-translationally, ubiquitinated via 'Lys-29'- and 'Lys-48'-linked ubiquitination by UBE3C, promoting its degradation. Deubiquitination by ZRANB1/TRABID promotes its stabilization, leading to autophagosome maturation. In terms of tissue distribution, ubiquitously expressed, with a highest expression in skeletal muscle.

The protein resides in the midbody. Its subcellular location is the late endosome. It is found in the cytoplasmic vesicle. The protein localises to the autophagosome. The enzyme catalyses a 1,2-diacyl-sn-glycero-3-phospho-(1D-myo-inositol) + ATP = a 1,2-diacyl-sn-glycero-3-phospho-(1D-myo-inositol-3-phosphate) + ADP + H(+). Functionally, catalytic subunit of the PI3K complex that mediates formation of phosphatidylinositol 3-phosphate; different complex forms are believed to play a role in multiple membrane trafficking pathways: PI3KC3-C1 is involved in initiation of autophagosomes and PI3KC3-C2 in maturation of autophagosomes and endocytosis. As part of PI3KC3-C1, promotes endoplasmic reticulum membrane curvature formation prior to vesicle budding. Involved in regulation of degradative endocytic trafficking and required for the abscission step in cytokinesis, probably in the context of PI3KC3-C2. Involved in the transport of lysosomal enzyme precursors to lysosomes. Required for transport from early to late endosomes. (Microbial infection) Kinase activity is required for SARS coronavirus-2/SARS-CoV-2 replication. The chain is Phosphatidylinositol 3-kinase catalytic subunit type 3 from Homo sapiens (Human).